A 183-amino-acid polypeptide reads, in one-letter code: Thymidine kinase (183 aa).

An ATP-binding site is contributed by 11 to 18 (GPMFSGKT). Residue glutamate 89 is the Proton acceptor of the active site. Phenylalanine 119 lines the substrate pocket. Positions 144 and 147 each coordinate Zn(2+). A substrate-binding site is contributed by 163 to 167 (VMDIG). Zn(2+)-binding residues include cysteine 176 and cysteine 179.

Belongs to the thymidine kinase family.

It carries out the reaction thymidine + ATP = dTMP + ADP + H(+). The sequence is that of Thymidine kinase (TK) from Vertebrata (FPV).